The chain runs to 252 residues: Imidazole glycerol phosphate synthase subunit HisF (252 aa).

Residues D11 and D130 contribute to the active site.

Belongs to the HisA/HisF family. Heterodimer of HisH and HisF.

The protein resides in the cytoplasm. It catalyses the reaction 5-[(5-phospho-1-deoxy-D-ribulos-1-ylimino)methylamino]-1-(5-phospho-beta-D-ribosyl)imidazole-4-carboxamide + L-glutamine = D-erythro-1-(imidazol-4-yl)glycerol 3-phosphate + 5-amino-1-(5-phospho-beta-D-ribosyl)imidazole-4-carboxamide + L-glutamate + H(+). It functions in the pathway amino-acid biosynthesis; L-histidine biosynthesis; L-histidine from 5-phospho-alpha-D-ribose 1-diphosphate: step 5/9. Its function is as follows. IGPS catalyzes the conversion of PRFAR and glutamine to IGP, AICAR and glutamate. The HisF subunit catalyzes the cyclization activity that produces IGP and AICAR from PRFAR using the ammonia provided by the HisH subunit. This is Imidazole glycerol phosphate synthase subunit HisF from Geobacillus thermodenitrificans (strain NG80-2).